We begin with the raw amino-acid sequence, 634 residues long: tRNA uridine 5-carboxymethylaminomethyl modification enzyme MnmG (634 aa).

An FAD-binding site is contributed by 13-18; it reads GAGHAG. 273-287 lines the NAD(+) pocket; sequence GPRYCPSIEDKIIKF.

Belongs to the MnmG family. In terms of assembly, homodimer. Heterotetramer of two MnmE and two MnmG subunits. FAD is required as a cofactor.

The protein localises to the cytoplasm. Its function is as follows. NAD-binding protein involved in the addition of a carboxymethylaminomethyl (cmnm) group at the wobble position (U34) of certain tRNAs, forming tRNA-cmnm(5)s(2)U34. In Buchnera aphidicola subsp. Cinara cedri (strain Cc), this protein is tRNA uridine 5-carboxymethylaminomethyl modification enzyme MnmG.